A 405-amino-acid chain; its full sequence is MKILEVNCGSSSLKYQLIDMEDEKVLAKGLVERIGIDGSILTHKVNGEKHVVSEPIKDHRVAVKLVLEALVDKQHGVIKDMSEISAVGHRVVHGGEQYSDAVIIDDKVMESLKDCSKLAPLHNPPNIIGINACKAIMPNTPMVAVFDTAFHHTMPKYAYIYPLPYELYERYGIRKYGFHGTSHRFVSEEAARLMGKDISELKIITCHLGNGASICAVDRGKSIDTNMGFTPLAGLAMGTRCGDIDPAIIPFLTNEIGMSIDEISNIMNNKSGILGMSGISSDFRDVEEIASFKHDRRAQLALDVFYYRVKSFIGSYVAVLDGVDAIVFTAGVGENSSIGRAEICSGLTYLGITIDEEKNNIRGKATEITTANSKTKVFVIPTNEELVIARDTKFLVQKKISHKSK.

Residue asparagine 7 coordinates Mg(2+). Lysine 14 is a binding site for ATP. Arginine 90 is a substrate binding site. Aspartate 147 serves as the catalytic Proton donor/acceptor. Residues 207–211 (HLGNG), 282–284 (DFR), and 331–335 (GVGEN) each bind ATP. Glutamate 384 provides a ligand contact to Mg(2+).

The protein belongs to the acetokinase family. In terms of assembly, homodimer. The cofactor is Mg(2+). It depends on Mn(2+) as a cofactor.

It is found in the cytoplasm. It catalyses the reaction acetate + ATP = acetyl phosphate + ADP. It participates in metabolic intermediate biosynthesis; acetyl-CoA biosynthesis; acetyl-CoA from acetate: step 1/2. Functionally, catalyzes the formation of acetyl phosphate from acetate and ATP. Can also catalyze the reverse reaction. The chain is Acetate kinase from Clostridium kluyveri (strain ATCC 8527 / DSM 555 / NBRC 12016 / NCIMB 10680 / K1).